The primary structure comprises 355 residues: Protein RecA (355 aa).

An ATP-binding site is contributed by 67 to 74 (GPESSGKT).

This sequence belongs to the RecA family.

The protein resides in the cytoplasm. Can catalyze the hydrolysis of ATP in the presence of single-stranded DNA, the ATP-dependent uptake of single-stranded DNA by duplex DNA, and the ATP-dependent hybridization of homologous single-stranded DNAs. It interacts with LexA causing its activation and leading to its autocatalytic cleavage. The chain is Protein RecA from Histophilus somni (strain 2336) (Haemophilus somnus).